Consider the following 409-residue polypeptide: Peptidase T (409 aa).

A Zn(2+)-binding site is contributed by histidine 78. Aspartate 80 is an active-site residue. Position 140 (aspartate 140) interacts with Zn(2+). The active-site Proton acceptor is glutamate 174. 3 residues coordinate Zn(2+): glutamate 175, aspartate 197, and histidine 379.

It belongs to the peptidase M20B family. It depends on Zn(2+) as a cofactor.

Its subcellular location is the cytoplasm. The catalysed reaction is Release of the N-terminal residue from a tripeptide.. Its function is as follows. Cleaves the N-terminal amino acid of tripeptides. The sequence is that of Peptidase T from Photobacterium profundum (strain SS9).